A 562-amino-acid chain; its full sequence is Dihydroxy-acid dehydratase (562 aa).

Residue D78 coordinates Mg(2+). C119 serves as a coordination point for [2Fe-2S] cluster. Positions 120 and 121 each coordinate Mg(2+). Residue K121 is modified to N6-carboxylysine. C192 contacts [2Fe-2S] cluster. E449 contacts Mg(2+). The active-site Proton acceptor is the S475.

Belongs to the IlvD/Edd family. Homodimer. Requires [2Fe-2S] cluster as cofactor. Mg(2+) is required as a cofactor.

It carries out the reaction (2R)-2,3-dihydroxy-3-methylbutanoate = 3-methyl-2-oxobutanoate + H2O. The catalysed reaction is (2R,3R)-2,3-dihydroxy-3-methylpentanoate = (S)-3-methyl-2-oxopentanoate + H2O. It participates in amino-acid biosynthesis; L-isoleucine biosynthesis; L-isoleucine from 2-oxobutanoate: step 3/4. Its pathway is amino-acid biosynthesis; L-valine biosynthesis; L-valine from pyruvate: step 3/4. Functions in the biosynthesis of branched-chain amino acids. Catalyzes the dehydration of (2R,3R)-2,3-dihydroxy-3-methylpentanoate (2,3-dihydroxy-3-methylvalerate) into 2-oxo-3-methylpentanoate (2-oxo-3-methylvalerate) and of (2R)-2,3-dihydroxy-3-methylbutanoate (2,3-dihydroxyisovalerate) into 2-oxo-3-methylbutanoate (2-oxoisovalerate), the penultimate precursor to L-isoleucine and L-valine, respectively. The chain is Dihydroxy-acid dehydratase from Aliarcobacter butzleri (strain RM4018) (Arcobacter butzleri).